The chain runs to 859 residues: Leucine--tRNA ligase (859 aa).

The short motif at 42-52 (PYPSGRLHMGH) is the 'HIGH' region element. The short motif at 618-622 (KMSKS) is the 'KMSKS' region element. Residue lysine 621 coordinates ATP.

It belongs to the class-I aminoacyl-tRNA synthetase family.

It is found in the cytoplasm. It catalyses the reaction tRNA(Leu) + L-leucine + ATP = L-leucyl-tRNA(Leu) + AMP + diphosphate. The chain is Leucine--tRNA ligase from Shewanella baltica (strain OS155 / ATCC BAA-1091).